The following is a 521-amino-acid chain: Bifunctional purine biosynthesis protein PurH (521 aa).

Residues 1-145 form the MGS-like domain; the sequence is MIKQALISVS…KNHRDVTVVV (145 aa).

This sequence belongs to the PurH family.

It carries out the reaction (6R)-10-formyltetrahydrofolate + 5-amino-1-(5-phospho-beta-D-ribosyl)imidazole-4-carboxamide = 5-formamido-1-(5-phospho-D-ribosyl)imidazole-4-carboxamide + (6S)-5,6,7,8-tetrahydrofolate. It catalyses the reaction IMP + H2O = 5-formamido-1-(5-phospho-D-ribosyl)imidazole-4-carboxamide. It participates in purine metabolism; IMP biosynthesis via de novo pathway; 5-formamido-1-(5-phospho-D-ribosyl)imidazole-4-carboxamide from 5-amino-1-(5-phospho-D-ribosyl)imidazole-4-carboxamide (10-formyl THF route): step 1/1. Its pathway is purine metabolism; IMP biosynthesis via de novo pathway; IMP from 5-formamido-1-(5-phospho-D-ribosyl)imidazole-4-carboxamide: step 1/1. The polypeptide is Bifunctional purine biosynthesis protein PurH (Burkholderia lata (strain ATCC 17760 / DSM 23089 / LMG 22485 / NCIMB 9086 / R18194 / 383)).